We begin with the raw amino-acid sequence, 317 residues long: Protoheme IX farnesyltransferase (317 aa).

9 helical membrane-spanning segments follow: residues 43 to 63, 65 to 85, 119 to 139, 140 to 160, 168 to 188, 195 to 215, 238 to 258, 261 to 281, and 292 to 312; these read PISV…AGAT, PVSG…CAGA, ALYW…NLNP, IAWI…SLWL, IVIG…AVTG, VLIA…LAIF, LNWL…IYFV, WGLV…ALSV, and AWVL…SMMV.

It belongs to the UbiA prenyltransferase family. Protoheme IX farnesyltransferase subfamily. In terms of assembly, interacts with CtaA.

Its subcellular location is the cell membrane. It catalyses the reaction heme b + (2E,6E)-farnesyl diphosphate + H2O = Fe(II)-heme o + diphosphate. It functions in the pathway porphyrin-containing compound metabolism; heme O biosynthesis; heme O from protoheme: step 1/1. Its function is as follows. Converts heme B (protoheme IX) to heme O by substitution of the vinyl group on carbon 2 of heme B porphyrin ring with a hydroxyethyl farnesyl side group. This chain is Protoheme IX farnesyltransferase, found in Desulforudis audaxviator (strain MP104C).